Here is a 177-residue protein sequence, read N- to C-terminus: Endothelin-2 (177 aa).

Positions 1–23 (MPTALCSIALALLVALHEGKSQA) are cleaved as a signal peptide. Positions 24–45 (ATTPIPEQPAPLPRARGSHLRT) are excised as a propeptide. Cystine bridges form between Cys-48/Cys-62 and Cys-50/Cys-58. Residues 69–177 (VNTPGQTAPY…RPTHSRQRKR (109 aa)) constitute a propeptide that is removed on maturation. Positions 95 to 110 (CECYSARDPACATFCH) are endothelin-like. Positions 155 to 177 (HFARQQQKPTRETRPTHSRQRKR) are disordered.

The protein belongs to the endothelin/sarafotoxin family. Expressed in various organs including heart, lung, liver, kidney, gastrointestinal tract, uterus and ovary, but not in spleen. Within the gastrointestinal tract, gene expression was detected in rumen, a ruminant-specific digestive organ, as well as stomach, duodenum and colon.

It localises to the secreted. Endothelins are endothelium-derived vasoconstrictor peptides. The polypeptide is Endothelin-2 (EDN2) (Bos taurus (Bovine)).